The primary structure comprises 454 residues: Growth/differentiation factor 6 (454 aa).

Positions 1–22 (MDTPRVLLWAIFLISFLWDLPG) are cleaved as a signal peptide. The propeptide occupies 23–334 (FQQASISSSS…LPSPGRRRRR (312 aa)). Residues 28-93 (ISSSSSSSTE…QGQEPPGRGL (66 aa)) form a disordered region. 2 stretches are compositionally biased toward basic and acidic residues: residues 39–52 (DSTKDVGNRKEGKM) and 60–73 (AEGRTPPEHGLRQK). Positions 81–92 (GQHQGQEPPGRG) are enriched in low complexity. Asparagine 117 is a glycosylation site (N-linked (GlcNAc...) asparagine). 2 disordered regions span residues 247-268 (DTGARARGPQQPPPLDLRSLGF) and 303-350 (AEAA…KKSR). The span at 303-319 (AEAAGAEGSWPAPSGSP) shows a compositional bias: low complexity. The span at 329 to 350 (GRRRRRTAFASRHGKRHGKKSR) shows a compositional bias: basic residues. Intrachain disulfides connect cysteine 353–cysteine 419, cysteine 382–cysteine 451, and cysteine 386–cysteine 453.

This sequence belongs to the TGF-beta family. In terms of assembly, homodimer; disulfide-linked. In terms of tissue distribution, expressed in different subsets of developing joints. Highly expressed in the cochlea.

It localises to the secreted. Growth factor that controls proliferation and cellular differentiation in the retina and bone formation. Plays a key role in regulating apoptosis during retinal development. Establishes dorsal-ventral positional information in the retina and controls the formation of the retinotectal map. Required for normal formation of bones and joints in the limbs, skull, digits and axial skeleton. Plays a key role in establishing boundaries between skeletal elements during development. Regulation of GDF6 expression seems to be a mechanism for evolving species-specific changes in skeletal structures. Seems to positively regulate differentiation of chondrogenic tissue through the growth factor receptors subunits BMPR1A, BMPR1B, BMPR2 and ACVR2A, leading to the activation of SMAD1-SMAD5-SMAD8 complex. The regulation of chondrogenic differentiation is inhibited by NOG. Also involved in the induction of adipogenesis from mesenchymal stem cells. This mechanism acts through the growth factor receptors subunits BMPR1A, BMPR2 and ACVR2A and the activation of SMAD1-SMAD5-SMAD8 complex and MAPK14/p38. The chain is Growth/differentiation factor 6 (Gdf6) from Mus musculus (Mouse).